The primary structure comprises 268 residues: Exodeoxyribonuclease III (268 aa).

Glutamate 34 is a Mg(2+) binding site. Tyrosine 109 is an active-site residue. Positions 151, 153, and 258 each coordinate Mg(2+). The Proton donor/acceptor role is filled by aspartate 151.

The protein belongs to the DNA repair enzymes AP/ExoA family. Monomer. Requires Mg(2+) as cofactor. Mn(2+) serves as cofactor.

The catalysed reaction is Exonucleolytic cleavage in the 3'- to 5'-direction to yield nucleoside 5'-phosphates.. Functionally, major apurinic-apyrimidinic endonuclease of E.coli. It removes the damaged DNA at cytosines and guanines by cleaving on the 3'-side of the AP site by a beta-elimination reaction. It exhibits 3'-5'-exonuclease, 3'-phosphomonoesterase, 3'-repair diesterase and ribonuclease H activities. The protein is Exodeoxyribonuclease III (xthA) of Salmonella typhi.